A 130-amino-acid polypeptide reads, in one-letter code: Ribosome-binding factor A (130 aa).

Belongs to the RbfA family. Monomer. Binds 30S ribosomal subunits, but not 50S ribosomal subunits or 70S ribosomes.

The protein localises to the cytoplasm. In terms of biological role, one of several proteins that assist in the late maturation steps of the functional core of the 30S ribosomal subunit. Associates with free 30S ribosomal subunits (but not with 30S subunits that are part of 70S ribosomes or polysomes). Required for efficient processing of 16S rRNA. May interact with the 5'-terminal helix region of 16S rRNA. This chain is Ribosome-binding factor A, found in Alkalilimnicola ehrlichii (strain ATCC BAA-1101 / DSM 17681 / MLHE-1).